The sequence spans 200 residues: RNA-binding protein with multiple splicing 2 (200 aa).

One can recognise an RRM domain in the interval 22-99 (RTLFVSGLPV…QTLRLEFAKA (78 aa)). Positions 32-42 (DIKPRELYLLF) are important for homodimerization.

As to quaternary structure, homodimer. Expressed in developing heart.

Its subcellular location is the cytoplasm. It is found in the nucleus. It localises to the stress granule. In terms of biological role, RNA-binding protein involved in the regulation of smooth muscle cell differentiation and proliferation in the gastrointestinal system. Binds NOG mRNA, the major inhibitor of the bone morphogenetic protein (BMP) pathway. Mediates an increase of NOG mRNA levels, thereby contributing to the negative regulation of BMP signaling pathway and promoting reversible dedifferentiation and proliferation of smooth muscle cells. Acts as a pre-mRNA alternative splicing regulator. Mediates ACTN1 and FLNB alternative splicing. Likely binds to mRNA tandem CAC trinucleotide or CA dinucleotide motifs. The sequence is that of RNA-binding protein with multiple splicing 2 from Gallus gallus (Chicken).